Reading from the N-terminus, the 1201-residue chain is Putative disease resistance protein At4g19050 (1201 aa).

33-40 contacts ATP; sequence GEAGIGKT. LRR repeat units lie at residues 469–491, 492–514, 517–539, 540–562, 680–701, 703–725, 726–748, 750–771, 773–795, 796–818, 820–841, 843–865, 866–888, and 890–911; these read KLRV…SGLQ, GLHV…FFKN, QLQS…EKLS, MLRC…IVET, ELRI…IADV, NLNK…EKLT, HLEV…FGEM, YLHE…ISEL, NLKE…EKLT, NLEI…FENL, CLHK…ISEL, HLVI…FESM, and YLCE…PKQS. Residues 1162-1180 show a composition bias toward basic and acidic residues; the sequence is DEPRIGARITDEISEDQPH. The disordered stretch occupies residues 1162-1201; that stretch reads DEPRIGARITDEISEDQPHKNTIGPETQTPTQPTKATDTV. Residues 1185 to 1201 show a composition bias toward polar residues; it reads GPETQTPTQPTKATDTV.

This sequence belongs to the disease resistance NB-LRR family.

Its function is as follows. Potential disease resistance protein. This is Putative disease resistance protein At4g19050 from Arabidopsis thaliana (Mouse-ear cress).